A 320-amino-acid chain; its full sequence is Lipoyl synthase (320 aa).

Residues 1-26 form a disordered region; the sequence is MVTVVDRVTSRRLRHPEKMHRPDTSI. Positions 59, 64, 70, 85, 89, 92, and 298 each coordinate [4Fe-4S] cluster. The 217-residue stretch at 71 to 287 folds into the Radical SAM core domain; that stretch reads WSQRHASFMI…AKIGKVKGFL (217 aa).

This sequence belongs to the radical SAM superfamily. Lipoyl synthase family. [4Fe-4S] cluster serves as cofactor.

The protein resides in the cytoplasm. It carries out the reaction [[Fe-S] cluster scaffold protein carrying a second [4Fe-4S](2+) cluster] + N(6)-octanoyl-L-lysyl-[protein] + 2 oxidized [2Fe-2S]-[ferredoxin] + 2 S-adenosyl-L-methionine + 4 H(+) = [[Fe-S] cluster scaffold protein] + N(6)-[(R)-dihydrolipoyl]-L-lysyl-[protein] + 4 Fe(3+) + 2 hydrogen sulfide + 2 5'-deoxyadenosine + 2 L-methionine + 2 reduced [2Fe-2S]-[ferredoxin]. The protein operates within protein modification; protein lipoylation via endogenous pathway; protein N(6)-(lipoyl)lysine from octanoyl-[acyl-carrier-protein]: step 2/2. In terms of biological role, catalyzes the radical-mediated insertion of two sulfur atoms into the C-6 and C-8 positions of the octanoyl moiety bound to the lipoyl domains of lipoate-dependent enzymes, thereby converting the octanoylated domains into lipoylated derivatives. This Bartonella quintana (strain Toulouse) (Rochalimaea quintana) protein is Lipoyl synthase.